A 455-amino-acid chain; its full sequence is MTQFHQRGVFYVPDGKRDKAKGGEPRIILLSFLGVLLPSAVLLTLPVFSVSGLSITDALFTATSAISVTGLGVVDTGQHFTLAGKILLMCLMQIGGLGQMTLSAVLLYMFGVRLSLRQQALAKEALGQERQVNLRRLVKKIVTFALVAEAIGFVFLSYRWVPEMGWQTGMFYALFHSISAFNNAGFALFSDSMMSFVNDPLVSFTLAGLFIFGGLGFTVIGDVWRHWRKGFHFLHIHTKIMLIATPLLLLVGTVLFWLLERHNPNTMGSLTTGGQWLAAFFQSASARTAGFNSVDLTQFTQPALLIMIVLMLIGAGSTSTGGGIKVSTFAVAFMATWTFLRQKKHVVMFKRTVNWPTVTKSLAIIVVSGAILTTAMFLLMLTEKASFDKVMFETISAFATVGLTAGLTAELSEPGKYIMIVVMIIGRIGPLTLAYMLARPEPTLIKYPEDTVLTG.

The chain crosses the membrane as a helical span at residues 27–47 (IILLSFLGVLLPSAVLLTLPV). The stretch at 54–74 (SITDALFTATSAISVTGLGVV) is an intramembrane region. 2 helical membrane-spanning segments follow: residues 86–106 (ILLM…SAVL) and 141–161 (IVTF…YRWV). Residues 169–189 (GMFYALFHSISAFNNAGFALF) lie within the membrane without spanning it. Transmembrane regions (helical) follow at residues 201-221 (LVSF…TVIG) and 240-260 (IMLI…WLLE). Residues 291–313 (FNSVDLTQFTQPALLIMIVLMLI) lie within the membrane without spanning it. The next 2 membrane-spanning stretches (helical) occupy residues 318-340 (TSTG…WTFL) and 362-382 (LAII…LMLT). The stretch at 390-410 (VMFETISAFATVGLTAGLTAE) is an intramembrane region. The chain crosses the membrane as a helical span at residues 418 to 438 (IMIVVMIIGRIGPLTLAYMLA).

The protein belongs to the TrkH potassium transport family. Ktr (TC 2.A.38.4) subfamily. The uptake system is composed of KtrA and KtrB.

Its subcellular location is the cell inner membrane. Its activity is regulated as follows. K(+) transport is stimulated by Na(+). Part of the Na(+)-dependent high affinity K(+) uptake system KtrAB. KtrB is the K(+)-translocating subunit. The polypeptide is Ktr system potassium uptake protein B (ktrB) (Vibrio alginolyticus).